An 80-amino-acid polypeptide reads, in one-letter code: Raniseptin-6 (80 aa).

Positions 1–22 (MAFLKKSLFLVLFLGIVSLSIC) are cleaved as a signal peptide. The propeptide occupies 23–49 (EEEKREGEEEEKQEEENEELSEEELRE).

Belongs to the frog skin active peptide (FSAP) family. Dermaseptin subfamily. As to expression, expressed by the skin glands.

It is found in the secreted. Functionally, has antibacterial activity. The sequence is that of Raniseptin-6 from Boana raniceps (Chaco tree frog).